Here is a 202-residue protein sequence, read N- to C-terminus: Putative 3-methyladenine DNA glycosylase (202 aa).

Belongs to the DNA glycosylase MPG family.

This is Putative 3-methyladenine DNA glycosylase from Clostridioides difficile (strain 630) (Peptoclostridium difficile).